A 514-amino-acid polypeptide reads, in one-letter code: 3-octaprenyl-4-hydroxybenzoate carboxy-lyase (514 aa).

Position 177 (N177) interacts with Mn(2+). Prenylated FMN is bound by residues 180–182, 194–196, and 199–200; these read IYR, RWL, and RG. Residue E243 participates in Mn(2+) binding. D314 functions as the Proton donor in the catalytic mechanism.

It belongs to the UbiD family. As to quaternary structure, homohexamer. Prenylated FMN serves as cofactor. Requires Mn(2+) as cofactor.

Its subcellular location is the cell membrane. The catalysed reaction is a 4-hydroxy-3-(all-trans-polyprenyl)benzoate + H(+) = a 2-(all-trans-polyprenyl)phenol + CO2. It functions in the pathway cofactor biosynthesis; ubiquinone biosynthesis. In terms of biological role, catalyzes the decarboxylation of 3-octaprenyl-4-hydroxy benzoate to 2-octaprenylphenol, an intermediate step in ubiquinone biosynthesis. The protein is 3-octaprenyl-4-hydroxybenzoate carboxy-lyase of Bordetella parapertussis (strain 12822 / ATCC BAA-587 / NCTC 13253).